A 390-amino-acid polypeptide reads, in one-letter code: 8-amino-7-oxononanoate synthase (390 aa).

Residue R19 coordinates substrate. 106–107 (GY) contributes to the pyridoxal 5'-phosphate binding site. H131 provides a ligand contact to substrate. S176, H204, and T233 together coordinate pyridoxal 5'-phosphate. N6-(pyridoxal phosphate)lysine is present on K236. T350 lines the substrate pocket.

It belongs to the class-II pyridoxal-phosphate-dependent aminotransferase family. BioF subfamily. In terms of assembly, homodimer. Pyridoxal 5'-phosphate serves as cofactor.

It catalyses the reaction 6-carboxyhexanoyl-[ACP] + L-alanine + H(+) = (8S)-8-amino-7-oxononanoate + holo-[ACP] + CO2. The protein operates within cofactor biosynthesis; biotin biosynthesis. Functionally, catalyzes the decarboxylative condensation of pimeloyl-[acyl-carrier protein] and L-alanine to produce 8-amino-7-oxononanoate (AON), [acyl-carrier protein], and carbon dioxide. In Pseudomonas putida (strain ATCC 47054 / DSM 6125 / CFBP 8728 / NCIMB 11950 / KT2440), this protein is 8-amino-7-oxononanoate synthase.